The primary structure comprises 368 residues: Alanine racemase (368 aa).

K40 serves as the catalytic Proton acceptor; specific for D-alanine. At K40 the chain carries N6-(pyridoxal phosphate)lysine. Residue R134 coordinates substrate. The active-site Proton acceptor; specific for L-alanine is Y263. Residue M310 coordinates substrate.

This sequence belongs to the alanine racemase family. Requires pyridoxal 5'-phosphate as cofactor.

The catalysed reaction is L-alanine = D-alanine. Its pathway is amino-acid biosynthesis; D-alanine biosynthesis; D-alanine from L-alanine: step 1/1. Functionally, catalyzes the interconversion of L-alanine and D-alanine. May also act on other amino acids. The chain is Alanine racemase (alr) from Listeria monocytogenes serotype 4a (strain HCC23).